The chain runs to 428 residues: 5'-deoxyadenosine deaminase (428 aa).

Positions 59 and 61 each coordinate Zn(2+). Positions 88 and 180 each coordinate substrate. H207 is a binding site for Zn(2+). Substrate is bound by residues E210 and D296. Position 296 (D296) interacts with Zn(2+).

This sequence belongs to the metallo-dependent hydrolases superfamily. MTA/SAH deaminase family. As to quaternary structure, homotetramer. Zn(2+) is required as a cofactor.

The enzyme catalyses 5'-deoxyadenosine + H2O + H(+) = 5'-deoxyinosine + NH4(+). The catalysed reaction is S-adenosyl-L-homocysteine + H2O + H(+) = S-inosyl-L-homocysteine + NH4(+). It catalyses the reaction S-methyl-5'-thioadenosine + H2O + H(+) = S-methyl-5'-thioinosine + NH4(+). It carries out the reaction adenosine + H2O + H(+) = inosine + NH4(+). The protein operates within amino-acid biosynthesis; S-adenosyl-L-methionine biosynthesis. Functionally, catalyzes the deamination of three SAM-derived enzymatic products, namely 5'-deoxyadenosine, S-adenosyl-L-homocysteine, and 5'-methylthioadenosine, to produce the inosine analogs. Can also deaminate adenosine. The preferred substrate for this enzyme is 5'-deoxyadenosine, but all these substrates are efficiently deaminated. Likely functions in a S-adenosyl-L-methionine (SAM) recycling pathway from S-adenosyl-L-homocysteine (SAH) produced from SAM-dependent methylation reactions. May also be involved in the recycling of 5'-deoxyadenosine, whereupon the 5'-deoxyribose moiety of 5'-deoxyinosine is further metabolized to deoxyhexoses used for the biosynthesis of aromatic amino acids in methanogens. This Methanococcus aeolicus (strain ATCC BAA-1280 / DSM 17508 / OCM 812 / Nankai-3) protein is 5'-deoxyadenosine deaminase.